Consider the following 327-residue polypeptide: MMVFLVSFISVEMKSMHCAPLFRQLVFSRSLHYSKTIFHNGRGLTSTSESEMSHFNALASSWWDVNGPQRILHKMNLLRMDFIHDTIRKNLKLNENTDDEVYIPPFSVDLLPQGIKNKIDEDQEMRRDEILNDSSLTVLDVGCGGGILSESMARLSFVSSVKGIDLSADVLEAAKLHKQKDPMLKDKLSYTLNAIEDIPETERFDIVTMFEVLEHVDYPSRVLLEGLKRLESGGWLFLSTINRDFVSWFTTIFMGEHVLRIVPVGTHTLEKYINQSEIKDWLQEDSNRKSEFRVADTKGCVYLPAYGWKFTSCPDVGNYFMAIQRVK.

S-adenosyl-L-methionine-binding residues include arginine 79, glycine 142, aspartate 165, and phenylalanine 210. Mg(2+) contacts are provided by glutamate 211, glutamate 214, and histidine 215.

The protein belongs to the class I-like SAM-binding methyltransferase superfamily. UbiG/COQ3 family. In terms of assembly, component of a multi-subunit COQ enzyme complex, composed of at least COQ3, COQ4, COQ5, COQ6, COQ7 and COQ9. Requires Mg(2+) as cofactor.

The protein resides in the mitochondrion inner membrane. The enzyme catalyses a 3,4-dihydroxy-5-(all-trans-polyprenyl)benzoate + S-adenosyl-L-methionine = a 4-hydroxy-3-methoxy-5-(all-trans-polyprenyl)benzoate + S-adenosyl-L-homocysteine + H(+). The catalysed reaction is a 3-demethylubiquinone + S-adenosyl-L-methionine = a ubiquinone + S-adenosyl-L-homocysteine. It catalyses the reaction a 3-demethylubiquinol + S-adenosyl-L-methionine = a ubiquinol + S-adenosyl-L-homocysteine + H(+). It functions in the pathway cofactor biosynthesis; ubiquinone biosynthesis. O-methyltransferase required for two non-consecutive steps during ubiquinone biosynthesis. Catalyzes the 2 O-methylation of 3,4-dihydroxy-5-(all-trans-polyprenyl)benzoic acid into 4-hydroxy-3-methoxy-5-(all-trans-polyprenyl)benzoic acid. Also catalyzes the last step of ubiquinone biosynthesis by mediating methylation of 3-demethylubiquinone into ubiquinone. Also able to mediate the methylation of 3-demethylubiquinol into ubiquinol. The protein is Ubiquinone biosynthesis O-methyltransferase, mitochondrial of Candida albicans (Yeast).